A 69-amino-acid polypeptide reads, in one-letter code: Large ribosomal subunit protein uL29 (69 aa).

It belongs to the universal ribosomal protein uL29 family.

This Rhodopseudomonas palustris (strain TIE-1) protein is Large ribosomal subunit protein uL29.